Reading from the N-terminus, the 156-residue chain is Small ribosomal subunit protein uS7 (156 aa).

This sequence belongs to the universal ribosomal protein uS7 family. In terms of assembly, part of the 30S ribosomal subunit. Contacts proteins S9 and S11.

In terms of biological role, one of the primary rRNA binding proteins, it binds directly to 16S rRNA where it nucleates assembly of the head domain of the 30S subunit. Is located at the subunit interface close to the decoding center, probably blocks exit of the E-site tRNA. This Prochlorococcus marinus (strain SARG / CCMP1375 / SS120) protein is Small ribosomal subunit protein uS7.